A 139-amino-acid chain; its full sequence is Actin-depolymerizing factor 9 (139 aa).

The 133-residue stretch at 7-139 (GLAVNDECKF…SLDIIRARAH (133 aa)) folds into the ADF-H domain.

This sequence belongs to the actin-binding proteins ADF family.

Its function is as follows. Actin-depolymerizing protein. Severs actin filaments (F-actin) and binds to actin monomers. The polypeptide is Actin-depolymerizing factor 9 (ADF9) (Oryza sativa subsp. japonica (Rice)).